The sequence spans 523 residues: Heparanase (523 aa).

An N-terminal signal peptide occupies residues 1–18 (MLVLLLLVLLLAVPPRRT). Residues 42–44 (DAS), T77, and 137–141 (KKHKN) contribute to the heparan sulfate group site. N-linked (GlcNAc...) asparagine glycans are attached at residues N141 and N196. E204 (proton donor) is an active-site residue. Residues 250-260 (QPRKHTQHLLR), H276, and R283 contribute to the heparan sulfate group site. Residues 268–397 (KAIDSVTWHH…LLYKRLVGTR (130 aa)) form a required for heterodimerization with the heparanase 8 kDa subunit region. E323 functions as the Nucleophile in the catalytic mechanism. Residues 328–330 (YGG) and 369–371 (GSY) each bind heparan sulfate group. C417 and C522 are disulfide-bonded. Residues N436 and N439 are each glycosylated (N-linked (GlcNAc...) asparagine). The interval 507 to 523 (FSYGFYVIRNAKAIACI) is required for transferring proheparanase to the Golgi apparatus, secretion and subsequent enzyme activity and for enhancement of PKB/AKT1 phosphorylation.

It belongs to the glycosyl hydrolase 79 family. As to quaternary structure, heterodimer; the active enzyme is a heterodimer of the 60 kDa and 45 kDa proteolytic products. N-glycosylated. Post-translationally, proteolytically cleaved to produce a 60 kDa and a 45 kDa product.

The protein localises to the secreted. The catalysed reaction is endohydrolysis of (1-&gt;4)-beta-D-glycosidic bonds of heparan sulfate chains in heparan sulfate proteoglycan.. In terms of biological role, endoglycosidase that cleaves heparan sulfate proteoglycans (HSPGs) into heparan sulfate side chains and core proteoglycans. Participates in extracellular matrix (ECM) degradation and remodeling. Selectively cleaves the linkage between a glucuronic acid unit and an N-sulfo glucosamine unit carrying either a 3-O-sulfo or a 6-O-sulfo group. Can also cleave the linkage between a glucuronic acid unit and an N-sulfo glucosamine unit carrying a 2-O-sulfo group, but not linkages between a glucuronic acid unit and a 2-O-sulfated iduronic acid moiety. Increases cell adhesion to the extracellular matrix (ECM), independent of its enzymatic activity. This is Heparanase (HPSE) from Gallus gallus (Chicken).